Consider the following 183-residue polypeptide: NADH-quinone oxidoreductase subunit I (183 aa).

2 consecutive 4Fe-4S ferredoxin-type domains span residues 71–100 (KRDE…MKAA) and 117–146 (EIYE…LTTS). Residues C80, C83, C86, C90, C126, C129, C132, and C136 each coordinate [4Fe-4S] cluster.

It belongs to the complex I 23 kDa subunit family. NDH-1 is composed of 14 different subunits. Subunits NuoA, H, J, K, L, M, N constitute the membrane sector of the complex. Requires [4Fe-4S] cluster as cofactor.

It localises to the cell inner membrane. It catalyses the reaction a quinone + NADH + 5 H(+)(in) = a quinol + NAD(+) + 4 H(+)(out). In terms of biological role, NDH-1 shuttles electrons from NADH, via FMN and iron-sulfur (Fe-S) centers, to quinones in the respiratory chain. The immediate electron acceptor for the enzyme in this species is believed to be ubiquinone. Couples the redox reaction to proton translocation (for every two electrons transferred, four hydrogen ions are translocated across the cytoplasmic membrane), and thus conserves the redox energy in a proton gradient. The sequence is that of NADH-quinone oxidoreductase subunit I from Flavobacterium psychrophilum (strain ATCC 49511 / DSM 21280 / CIP 103535 / JIP02/86).